The chain runs to 484 residues: Phosphomevalonate kinase erg8 (484 aa).

Residues 54–77 (REAASGSAHGRSDTPQAEGNVHGD) are disordered. 184 to 194 (AHKTGLGSSAA) contributes to the ATP binding site.

It belongs to the GHMP kinase family. Mevalonate kinase subfamily.

The catalysed reaction is (R)-5-phosphomevalonate + ATP = (R)-5-diphosphomevalonate + ADP. It participates in isoprenoid biosynthesis; isopentenyl diphosphate biosynthesis via mevalonate pathway; isopentenyl diphosphate from (R)-mevalonate: step 2/3. Functionally, phosphomevalonate kinase; part of the second module of ergosterol biosynthesis pathway that includes the middle steps of the pathway. Erg8 converts 5-phosphomevalonate to 5-diphosphomevalonate. The second module is carried out in the vacuole and involves the formation of farnesyl diphosphate, which is also an important intermediate in the biosynthesis of ubiquinone, dolichol, heme and prenylated proteins. Activity by the mevalonate kinase erg12 (AFUA_4G07780) first converts mevalonate into 5-phosphomevalonate. 5-phosphomevalonate is then further converted to 5-diphosphomevalonate by the phosphomevalonate kinase erg8 (AFUA_5G10680). The diphosphomevalonate decarboxylase mvd1 (AFUA_4G07130) then produces isopentenyl diphosphate. The isopentenyl-diphosphate delta-isomerase idi1 (AFUA_6G11160) then catalyzes the 1,3-allylic rearrangement of the homoallylic substrate isopentenyl (IPP) to its highly electrophilic allylic isomer, dimethylallyl diphosphate (DMAPP). Finally the farnesyl diphosphate synthase erg20 (AFUA_5G02450) catalyzes the sequential condensation of isopentenyl pyrophosphate with dimethylallyl pyrophosphate, and then with the resultant geranylpyrophosphate to the ultimate product farnesyl pyrophosphate. This chain is Phosphomevalonate kinase erg8, found in Aspergillus fumigatus (strain ATCC MYA-4609 / CBS 101355 / FGSC A1100 / Af293) (Neosartorya fumigata).